Here is a 569-residue protein sequence, read N- to C-terminus: MELSELIEVTRVRDAFMRKGPRPAQVGDICIFGHHLIFAPTTVGKEVPDNAEEFWLLHKAVDRVLCEPISKENPQRGGLLALKCKNFLLIIFEIGDLEICRATARTIESLSNINGFLHDYAFFYNSPFTILDDGWSAFDLEQEFARLMLSTDAFRISSVNENFAICPTYPEKLIVPKGIGDDYLKISATFREGGRFPVLSYFHKETKSPLVRCSQPLIGPTNRRCREDETILNSMITVNRGYIIDTRSKSSATAAKAKGGGAEPQGNYRQWRYIQCPIPRQREIHDALTRMVDVCSERKVTSDRWVSRVGQAGWLSSVAASLEAAANVAQCIYNERLEEVPVVIHGGDGLDSTLIASSLAQILLDADARTIRGFESVIEREWICGGHPFSLRNNHCAYAEGTVTGPFESPVFLVFLDAVHQMIAQYPMSFEFDENFLIFLFEHAYASEFGSFLGNCEKEKKDNGIRKKTVSLWSHVHHPENMKQFVNVCYDPTPGVIWPSIAPQCIKIWDRLFFRWQRPDNSWSTPETETIQSLADHWKLREKELIAKASSLRRSVVELSRELRVLSPM.

The Myotubularin phosphatase domain occupies 134-513 (GWSAFDLEQE…QCIKIWDRLF (380 aa)).

Belongs to the protein-tyrosine phosphatase family. Non-receptor class myotubularin subfamily. Heterodimer with lipid phosphatase mtm-6.

The protein resides in the cytoplasm. Its subcellular location is the membrane. May act as a regulatory subunit for mtm-6. In association with phosphatase mtm-6, plays a role in endosome trafficking probably by regulating phosphatidylinositol-3-phosphate levels. Regulates fluid phase endocytosis in coelomocytes. Regulates posterior migration of QL neuroblast descendants and the anterior migration of QR neuroblast descendants and HSN neurons during larval development probably by controlling Wnt ligand secretion through the regulation of sorting receptor mig-14 trafficking. Involved in the formation of correct synapse number in DA9 motor neurons. This Caenorhabditis elegans protein is Myotubularin-related protein 9.